The primary structure comprises 491 residues: Phosphoethanolamine N-methyltransferase 1 (491 aa).

The residue at position 2 (Ala2) is an N-acetylalanine. 6 residues coordinate S-adenosyl-L-homocysteine: Gly61, Arg66, Asp82, Asp107, Val108, and Asn126. Phosphocholine is bound by residues Ser159, Ser164, Gly165, Arg169, and Tyr176. N-methylethanolamine phosphate contacts are provided by residues 245–246 (QY) and Tyr254. Tyr254 serves as a coordination point for phosphocholine. Residues Val263, Ser264, Gly290, Asp312, Asp338, Cys339, and Arg355 each contribute to the S-adenosyl-L-homocysteine site. Residues Tyr386, Tyr400, Arg404, Tyr406, and Lys472 each contribute to the phosphocholine site. N-methylethanolamine phosphate contacts are provided by residues Tyr386, Tyr400, 404 to 406 (RGY), and Lys472.

The protein belongs to the class I-like SAM-binding methyltransferase superfamily. PEAMT family. As to expression, highly expressed in the meristem and elongation zones of the root. Expressed in differentiated root epidermal cells. Highly expressed in leaf vasculature.

Its subcellular location is the cytoplasm. It catalyses the reaction phosphoethanolamine + S-adenosyl-L-methionine = N-methylethanolamine phosphate + S-adenosyl-L-homocysteine + H(+). It carries out the reaction N-methylethanolamine phosphate + S-adenosyl-L-methionine = N,N-dimethylethanolamine phosphate + S-adenosyl-L-homocysteine + H(+). The enzyme catalyses N,N-dimethylethanolamine phosphate + S-adenosyl-L-methionine = phosphocholine + S-adenosyl-L-homocysteine + H(+). Its pathway is phospholipid metabolism; phosphatidylcholine biosynthesis; phosphocholine from phosphoethanolamine: step 1/1. Its function is as follows. Involved in phosphocholine biosynthesis. Catalyzes the N-methylation of phosphoethanolamine, phosphomonomethylethanolamine and phosphodimethylethanolamine, the three methylation steps required to convert phosphoethanolamine to phosphocholine (PC). Required for root system development and epidermal cell integrity through its role in choline and phospholipid metabolism. In association with NMT3, regulates PC homeostasis, phase transition at the shoot apex, coordinated organ development, and fertility. In association with NMT3, involved in phosphatidylcholine biosynthesis and vascular development. In association with NMT2, involved in the production of phosphatidylcholine in roots, essential for root development. In association with NMT2 produce phosphocholine mainly for leaf growth maintenance. Contributes to the regulation of overall root zonation dynamics through reactive oxygen species (ROS) and auxin-regulated cell differentiation. Participates in root development of primary root elongation under salt stress conditions by balancing reactive oxygen species (ROS) production and distribution through abscisic acid (ABA) signaling. The polypeptide is Phosphoethanolamine N-methyltransferase 1 (Arabidopsis thaliana (Mouse-ear cress)).